Reading from the N-terminus, the 1027-residue chain is Translation initiation factor IF-2 (1027 aa).

The interval 31-433 is disordered; the sequence is YVKSASSTVE…GGVRLPRGNG (403 aa). Positions 57-68 are enriched in gly residues; the sequence is KKGGGDSNGRAG. Residues 110 to 122 are compositionally biased toward pro residues; sequence GPKPGPKPGPKAP. Positions 123–145 are enriched in low complexity; the sequence is APETKPFEEAPAPAAKADAPAQP. A compositionally biased stretch (basic and acidic residues) spans 148–171; the sequence is EQPRSEQPRSEQPRSEQPRSERSG. 2 stretches are compositionally biased toward pro residues: residues 174 to 188 and 201 to 212; these read PGGP…PKPG and PPKPQSPKPGPR. The segment covering 237 to 268 has biased composition (gly residues); that stretch reads PGGGQRQGGQGPGRGGPQGGRPDRQGGGGQGA. Pro residues predominate over residues 293–302; sequence GMMPPRPNPG. Residues 311–397 are compositionally biased toward gly residues; it reads SGGGPGGGRG…GAAGAFGRPG (87 aa). A compositionally biased stretch (basic residues) spans 401-410; it reads RRGRKSKRQK. The region spanning 523–695 is the tr-type G domain; that stretch reads SRPPVVTVMG…ILLTADATLD (173 aa). Positions 532-539 are G1; it reads GHVDHGKT. 532–539 is a binding site for GTP; it reads GHVDHGKT. Residues 557 to 561 form a G2 region; sequence GITQH. Residues 582–585 are G3; it reads DTPG. GTP-binding positions include 582 to 586 and 636 to 639; these read DTPGH and NKID. The interval 636–639 is G4; it reads NKID. A G5 region spans residues 672–674; it reads SAR.

This sequence belongs to the TRAFAC class translation factor GTPase superfamily. Classic translation factor GTPase family. IF-2 subfamily.

Its subcellular location is the cytoplasm. In terms of biological role, one of the essential components for the initiation of protein synthesis. Protects formylmethionyl-tRNA from spontaneous hydrolysis and promotes its binding to the 30S ribosomal subunits. Also involved in the hydrolysis of GTP during the formation of the 70S ribosomal complex. This chain is Translation initiation factor IF-2, found in Saccharopolyspora erythraea (strain ATCC 11635 / DSM 40517 / JCM 4748 / NBRC 13426 / NCIMB 8594 / NRRL 2338).